We begin with the raw amino-acid sequence, 420 residues long: Pyrin and HIN domain-containing protein 1 (420 aa).

The region spanning 1-87 is the Pyrin domain; that stretch reads MVNEYKRIVL…ANKLKNEKAK (87 aa). 2 disordered regions span residues 82–201 and 216–236; these read KNEK…SSSA and RLKN…GSKK. Residues 87–102 are compositionally biased toward basic residues; the sequence is KAKRTRTGKRKTAAKR. 2 stretches are compositionally biased toward polar residues: residues 108-118 and 126-151; these read PSTSQPMSTTN and GRST…AIQI. A compositionally biased stretch (low complexity) spans 152–169; it reads SPTIASSSGQTSSRSSET. Polar residues predominate over residues 170-201; sequence LQSIIQSPKTPKRPSSSILDPPVSSGTASSSA. The HIN-200 domain maps to 219–416; that stretch reads NVPKEPSEEN…STTHSNMQVI (198 aa). Basic and acidic residues predominate over residues 220–229; that stretch reads VPKEPSEENG.

The protein belongs to the HIN-200 family.

It is found in the nucleus. The polypeptide is Pyrin and HIN domain-containing protein 1 (Mus musculus (Mouse)).